The primary structure comprises 196 residues: GTP cyclohydrolase-2 (196 aa).

49 to 53 (RVHSE) lines the GTP pocket. Positions 54, 65, and 67 each coordinate Zn(2+). GTP-binding positions include Gln70, 92–94 (EGR), and Thr114. Asp126 (proton acceptor) is an active-site residue. The active-site Nucleophile is Arg128. 2 residues coordinate GTP: Thr149 and Lys154.

Belongs to the GTP cyclohydrolase II family. In terms of assembly, homodimer. Zn(2+) is required as a cofactor.

The catalysed reaction is GTP + 4 H2O = 2,5-diamino-6-hydroxy-4-(5-phosphoribosylamino)-pyrimidine + formate + 2 phosphate + 3 H(+). It participates in cofactor biosynthesis; riboflavin biosynthesis; 5-amino-6-(D-ribitylamino)uracil from GTP: step 1/4. Catalyzes the conversion of GTP to 2,5-diamino-6-ribosylamino-4(3H)-pyrimidinone 5'-phosphate (DARP), formate and pyrophosphate. This is GTP cyclohydrolase-2 from Escherichia coli O45:K1 (strain S88 / ExPEC).